The following is a 126-amino-acid chain: Small ribosomal subunit protein eS6 (126 aa).

It belongs to the eukaryotic ribosomal protein eS6 family.

The chain is Small ribosomal subunit protein eS6 from Methanothermobacter thermautotrophicus (strain ATCC 29096 / DSM 1053 / JCM 10044 / NBRC 100330 / Delta H) (Methanobacterium thermoautotrophicum).